Here is a 600-residue protein sequence, read N- to C-terminus: Terpenoid synthase 8 (600 aa).

D352, D356, N497, and D505 together coordinate Mg(2+). The DDXXD motif motif lies at 352 to 356; it reads DDTCD.

It belongs to the terpene synthase family. Tpsa subfamily. It depends on Mg(2+) as a cofactor. The cofactor is Mn(2+). As to expression, stele, and tips of primary and secondary root.

It localises to the plastid. The enzyme catalyses (2E,6E,10E)-geranylgeranyl diphosphate = rhizathalene A + diphosphate. It participates in secondary metabolite biosynthesis; terpenoid biosynthesis. Its function is as follows. Catalyzes the synthesis of the semivolatile diterpene rhizatalene A. The sequence is that of Terpenoid synthase 8 (TPS08) from Arabidopsis thaliana (Mouse-ear cress).